The sequence spans 127 residues: Methylglyoxal synthase (127 aa).

Residues 1–127 enclose the MGS-like domain; it reads MEKKIALIAH…IKGLESLILR (127 aa). Substrate contacts are provided by residues His10, Lys14, 36–39, and 56–57; these read TGTT and SG. Asp62 serves as the catalytic Proton donor/acceptor. His89 contacts substrate.

This sequence belongs to the methylglyoxal synthase family.

The enzyme catalyses dihydroxyacetone phosphate = methylglyoxal + phosphate. Catalyzes the formation of methylglyoxal from dihydroxyacetone phosphate. This Borreliella afzelii (strain PKo) (Borrelia afzelii) protein is Methylglyoxal synthase.